The following is a 145-amino-acid chain: Large ribosomal subunit protein uL15 (145 aa).

A disordered region spans residues 1 to 42; it reads MELHTLKATPGSRKAKHRVGRGHAAGKGKQAGRGQSGQTKRS. Positions 13 to 26 are enriched in basic residues; sequence RKAKHRVGRGHAAG.

Belongs to the universal ribosomal protein uL15 family. In terms of assembly, part of the 50S ribosomal subunit.

Its function is as follows. Binds to the 23S rRNA. The sequence is that of Large ribosomal subunit protein uL15 from Metamycoplasma arthritidis (strain 158L3-1) (Mycoplasma arthritidis).